Reading from the N-terminus, the 202-residue chain is ATP-dependent Clp protease proteolytic subunit (202 aa).

The Nucleophile role is filled by Ser101. His126 is a catalytic residue.

The protein belongs to the peptidase S14 family. In terms of assembly, component of the chloroplastic Clp protease core complex.

Its subcellular location is the plastid. It is found in the chloroplast stroma. It carries out the reaction Hydrolysis of proteins to small peptides in the presence of ATP and magnesium. alpha-casein is the usual test substrate. In the absence of ATP, only oligopeptides shorter than five residues are hydrolyzed (such as succinyl-Leu-Tyr-|-NHMec, and Leu-Tyr-Leu-|-Tyr-Trp, in which cleavage of the -Tyr-|-Leu- and -Tyr-|-Trp bonds also occurs).. In terms of biological role, cleaves peptides in various proteins in a process that requires ATP hydrolysis. Has a chymotrypsin-like activity. Plays a major role in the degradation of misfolded proteins. This chain is ATP-dependent Clp protease proteolytic subunit, found in Calycanthus floridus var. glaucus (Eastern sweetshrub).